A 307-amino-acid chain; its full sequence is N-acetylmuramic acid 6-phosphate etherase (307 aa).

An SIS domain is found at 59–222; the sequence is TADRLRQGGR…STGVMVKLGK (164 aa). Catalysis depends on Glu-87, which acts as the Proton donor. Glu-118 is an active-site residue.

The protein belongs to the GCKR-like family. MurNAc-6-P etherase subfamily. Homodimer.

It catalyses the reaction N-acetyl-D-muramate 6-phosphate + H2O = N-acetyl-D-glucosamine 6-phosphate + (R)-lactate. It participates in amino-sugar metabolism; N-acetylmuramate degradation. Specifically catalyzes the cleavage of the D-lactyl ether substituent of MurNAc 6-phosphate, producing GlcNAc 6-phosphate and D-lactate. This is N-acetylmuramic acid 6-phosphate etherase from Trichormus variabilis (strain ATCC 29413 / PCC 7937) (Anabaena variabilis).